The primary structure comprises 864 residues: Protein 4.1 (864 aa).

Polar residues-rich tracts occupy residues 1 to 16 (MTTE…NSQH) and 27 to 41 (NSGQ…SCQT). Disordered regions lie at residues 1–122 (MTTE…GTSL), 136–170 (EPEL…DFEI), and 182–202 (IEVK…ASQK). Ser14 is subject to Phosphoserine. Thr60 carries the phosphothreonine; by CDK1 modification. Basic and acidic residues predominate over residues 61–75 (PTHEDLTKNKERTSE). A compositionally biased stretch (low complexity) spans 76-87 (SRGLSRLFSSFL). Phosphoserine is present on residues Ser84, Ser85, Ser95, Ser104, Ser121, Ser149, Ser151, Ser152, Ser188, and Ser191. Basic and acidic residues predominate over residues 101 to 117 (EVESDKEKGEGGQKEIE). A compositionally biased stretch (polar residues) spans 149–158 (SLSSAETQPA). The span at 182-199 (IEVKEESPQSKAETELKA) shows a compositional bias: basic and acidic residues. Residues 210–491 (MHCKVSLLDD…EHHTFFRLTS (282 aa)) enclose the FERM domain. Phosphotyrosine is present on Tyr222. Thr378 bears the Phosphothreonine mark. The hydrophilic stretch occupies residues 494 to 614 (TIPKSKFLAL…QAEPEPTEAW (121 aa)). 2 disordered regions span residues 518-572 (RQAS…VAEG) and 586-611 (KAQK…PEPT). Phosphoserine is present on residues Ser521, Ser540, Ser542, and Ser555. Basic and acidic residues predominate over residues 587-600 (AQKETVKAEVKKED). A compositionally biased stretch (acidic residues) spans 601–610 (EPPEQAEPEP). Positions 615-713 (KVEKTHIEVT…WDKRLSTHSP (99 aa)) are spectrin--actin-binding. The residue at position 660 (Tyr660) is a Phosphotyrosine; by EGFR. Residues Ser664, Ser674, Ser684, and Ser709 each carry the phosphoserine modification. Residue Ser712 is modified to Phosphoserine; by CDK1. Residues 714 to 864 (FRTLNINGQI…VHQETEIADE (151 aa)) are C-terminal (CTD). Phosphothreonine occurs at positions 736 and 859.

As to quaternary structure, binds with a high affinity to glycophorin and with lower affinity to band III protein. Associates with the nuclear mitotic apparatus. Interacts with calmodulin. Interacts with CPAP. Interacts with DLG1. Also found to associate with contractile apparatus and tight junctions. Interacts with NUMA1; this interaction is negatively regulated by CDK1 during metaphase and promotes anaphase-specific localization of NUMA1 in symmetrically dividing cells. Interacts with ATP2B1; regulates small intestinal calcium absorption through regulation of membrane expression of ATP2B1. In terms of processing, phosphorylated at multiple sites by different protein kinases and each phosphorylation event selectively modulates the protein's functions. Phosphorylation on Tyr-660 reduces the ability of 4.1 to promote the assembly of the spectrin/actin/4.1 ternary complex. Post-translationally, O-glycosylated; contains N-acetylglucosamine side chains in the C-terminal domain.

It localises to the cytoplasm. The protein resides in the cytoskeleton. The protein localises to the cell cortex. It is found in the nucleus. Functionally, protein 4.1 is a major structural element of the erythrocyte membrane skeleton. It plays a key role in regulating membrane physical properties of mechanical stability and deformability by stabilizing spectrin-actin interaction. Recruits DLG1 to membranes. Required for dynein-dynactin complex and NUMA1 recruitment at the mitotic cell cortex during anaphase. The protein is Protein 4.1 of Homo sapiens (Human).